The sequence spans 1335 residues: Aldehyde oxidase 2 (1335 aa).

Residues 8-95 enclose the 2Fe-2S ferredoxin-type domain; it reads DVLVFFVNGR…GAAVTTVEGV (88 aa). The [2Fe-2S] cluster site is built by C47, C52, C55, and C77. Q116 lines the Mo-molybdopterin pocket. [2Fe-2S] cluster contacts are provided by C117, C120, C152, and C154. C154 is a Mo-molybdopterin binding site. Residues 242–427 enclose the FAD-binding PCMH-type domain; that stretch reads FRGDRVTWVS…ESVHIPHSQK (186 aa). FAD is bound by residues 270-277, A351, S360, H364, D373, and L417; that span reads LVLGNTAL. Residues 821–822, 1103–1106, Q1218, and L1285 each bind Mo-molybdopterin; these read GF and ASVG. E1287 (proton acceptor; for azaheterocycle hydroxylase activity) is an active-site residue.

The protein belongs to the xanthine dehydrogenase family. Homodimer. The cofactor is [2Fe-2S] cluster. FAD serves as cofactor. It depends on Mo-molybdopterin as a cofactor. Detected in kidney, Harderian gland and olfactory mucosa.

It is found in the cytoplasm. It catalyses the reaction an aldehyde + O2 + H2O = a carboxylate + H2O2 + H(+). Its function is as follows. Oxidase with broad substrate specificity, oxidizing aromatic azaheterocycles, such as phthalazine, as well as aldehydes, such as benzaldehyde and retinal. The sequence is that of Aldehyde oxidase 2 (AOX2) from Cavia porcellus (Guinea pig).